Here is a 322-residue protein sequence, read N- to C-terminus: Formimidoylglutamase (322 aa).

H130, D156, H158, D160, C244, and D246 together coordinate Mn(2+).

The protein belongs to the arginase family. Mn(2+) is required as a cofactor.

It carries out the reaction N-formimidoyl-L-glutamate + H2O = formamide + L-glutamate. The protein operates within amino-acid degradation; L-histidine degradation into L-glutamate; L-glutamate from N-formimidoyl-L-glutamate (hydrolase route): step 1/1. In terms of biological role, catalyzes the conversion of N-formimidoyl-L-glutamate to L-glutamate and formamide. The sequence is that of Formimidoylglutamase from Geobacillus thermodenitrificans (strain NG80-2).